A 145-amino-acid chain; its full sequence is Superoxide dismutase [Mn/Fe] (145 aa).

Positions 10 and 64 each coordinate Fe(3+). 2 residues coordinate Mn(2+): His-10 and His-64.

The protein belongs to the iron/manganese superoxide dismutase family. Mn(2+) is required as a cofactor. The cofactor is Fe(3+).

The enzyme catalyses 2 superoxide + 2 H(+) = H2O2 + O2. Functionally, destroys superoxide anion radicals which are normally produced within the cells and which are toxic to biological systems. Catalyzes the dismutation of superoxide anion radicals into O2 and H2O2 by successive reduction and oxidation of the transition metal ion at the active site. The sequence is that of Superoxide dismutase [Mn/Fe] (sodA) from Streptococcus acidominimus.